The following is a 1036-amino-acid chain: Protein CLEC16A (1036 aa).

Residues 51–198 enclose the FPL domain; it reads IRSITEILIW…AVRTITLNVY (148 aa). Disordered stretches follow at residues 375–416, 437–458, 876–967, and 1008–1036; these read SLEM…DAEK, GTSV…NSEN, HSSP…PSLL, and SQLP…PTEH. Over residues 381–392 the composition is skewed to basic residues; that stretch reads HKGKKRMQKRPN. Composition is skewed to low complexity over residues 877–891, 898–923, and 943–954; these read SSPS…FASG, STSH…APTT, and NSKPSKNSSARS.

It belongs to the CLEC16A/gop-1 family. Interacts with RNF41/NRDP1. In terms of tissue distribution, ubiquitously expressed. Expressed in pancreatic islets.

The protein resides in the endosome membrane. It is found in the lysosome membrane. Its function is as follows. Regulator of mitophagy through the upstream regulation of the RNF41/NRDP1-PRKN pathway. Mitophagy is a selective form of autophagy necessary for mitochondrial quality control. The RNF41/NRDP1-PRKN pathway regulates autophagosome-lysosome fusion during late mitophagy. May protect RNF41/NRDP1 from proteasomal degradation, RNF41/NRDP1 which regulates proteasomal degradation of PRKN. Plays a key role in beta cells functions by regulating mitophagy/autophagy and mitochondrial health. This is Protein CLEC16A from Mus musculus (Mouse).